A 392-amino-acid polypeptide reads, in one-letter code: MKVENGQLQGWWAQRAEGPAKILAIGTATPFHWVDQNSYPDYYFRVTNSQHLVDLKEKFRRICSKTMIKKRHMFLTEELLRKNPTLCSHNEPSLDIRQDILVSEIPKLGKEAALKAIGEWGQPKSTITHLVFCTRSGVDMPGADCQLVKLLGLSPSVQRLMMYQQGCFAGGTMLRLAKDLAENNKGARVLVVCAESSAIGFRGPSEANVDNLIAQALFGDGAAALIIGSDPKPGLERPVFEIFSAAQTFVPNGDCHLALHLREMGLTFHCTKDVPPTIAKNVESCLIKAFEPLGISDWNSLFWILHPGGNAIVDQVESTLGLGPEKLRATRNILSEYGNLSSACCLFILDEIRKKSAREGMRTSGDGLDLGVLLSFGPGLTIETVVLRSVPI.

The active site involves Cys-167.

This sequence belongs to the thiolase-like superfamily. Chalcone/stilbene synthases family. In terms of tissue distribution, expressed at low level in seedlings after illumination with UV light. No expression in flowers or tissue culture.

The enzyme catalyses (E)-4-coumaroyl-CoA + 3 malonyl-CoA + 3 H(+) = 2',4,4',6'-tetrahydroxychalcone + 3 CO2 + 4 CoA. It functions in the pathway secondary metabolite biosynthesis; flavonoid biosynthesis. Its function is as follows. The primary product of this enzyme is 4,2',4',6'-tetrahydroxychalcone (also termed naringenin-chalcone or chalcone) which can under specific conditions spontaneously isomerize into naringenin. The polypeptide is Chalcone synthase B (CHSB) (Petunia hybrida (Petunia)).